Here is a 377-residue protein sequence, read N- to C-terminus: Chaperone protein DnaJ (377 aa).

The region spanning 5–69 (EYYDRLGLSK…QKRAAYDQYG (65 aa)) is the J domain. A CR-type zinc finger spans residues 133 to 215 (GAEKEIHYNR…CHGTGREKQS (83 aa)). Zn(2+) is bound by residues C146, C149, C163, C166, C189, C192, C203, and C206. CXXCXGXG motif repeat units lie at residues 146-153 (CKTCSGSG), 163-170 (CGRCHGHG), 189-196 (CDVCHGTG), and 203-210 (CQTCHGTG).

This sequence belongs to the DnaJ family. As to quaternary structure, homodimer. Zn(2+) is required as a cofactor.

It is found in the cytoplasm. Functionally, participates actively in the response to hyperosmotic and heat shock by preventing the aggregation of stress-denatured proteins and by disaggregating proteins, also in an autonomous, DnaK-independent fashion. Unfolded proteins bind initially to DnaJ; upon interaction with the DnaJ-bound protein, DnaK hydrolyzes its bound ATP, resulting in the formation of a stable complex. GrpE releases ADP from DnaK; ATP binding to DnaK triggers the release of the substrate protein, thus completing the reaction cycle. Several rounds of ATP-dependent interactions between DnaJ, DnaK and GrpE are required for fully efficient folding. Also involved, together with DnaK and GrpE, in the DNA replication of plasmids through activation of initiation proteins. The chain is Chaperone protein DnaJ from Streptococcus thermophilus (strain CNRZ 1066).